The sequence spans 273 residues: Dermonecrotic toxin LapSicTox-alphaIB1aiii (273 aa).

Histidine 5 is an active-site residue. Mg(2+) contacts are provided by glutamate 25 and aspartate 27. The Nucleophile role is filled by histidine 41. Disulfide bonds link cysteine 45-cysteine 51 and cysteine 47-cysteine 190. Aspartate 85 contacts Mg(2+). An N-linked (GlcNAc...) asparagine glycan is attached at asparagine 250.

This sequence belongs to the arthropod phospholipase D family. Class II subfamily. Requires Mg(2+) as cofactor. Expressed by the venom gland.

Its subcellular location is the secreted. The catalysed reaction is an N-(acyl)-sphingosylphosphocholine = an N-(acyl)-sphingosyl-1,3-cyclic phosphate + choline. It carries out the reaction an N-(acyl)-sphingosylphosphoethanolamine = an N-(acyl)-sphingosyl-1,3-cyclic phosphate + ethanolamine. The enzyme catalyses a 1-acyl-sn-glycero-3-phosphocholine = a 1-acyl-sn-glycero-2,3-cyclic phosphate + choline. It catalyses the reaction a 1-acyl-sn-glycero-3-phosphoethanolamine = a 1-acyl-sn-glycero-2,3-cyclic phosphate + ethanolamine. Dermonecrotic toxins cleave the phosphodiester linkage between the phosphate and headgroup of certain phospholipids (sphingolipid and lysolipid substrates), forming an alcohol (often choline) and a cyclic phosphate. This toxin acts on sphingomyelin (SM). It may also act on ceramide phosphoethanolamine (CPE), lysophosphatidylcholine (LPC) and lysophosphatidylethanolamine (LPE), but not on lysophosphatidylserine (LPS), and lysophosphatidylglycerol (LPG). It acts by transphosphatidylation, releasing exclusively cyclic phosphate products as second products. Induces dermonecrosis, hemolysis, increased vascular permeability, edema, inflammatory response, and platelet aggregation. The sequence is that of Dermonecrotic toxin LapSicTox-alphaIB1aiii from Loxosceles apachea (Apache recluse spider).